A 398-amino-acid chain; its full sequence is Ubiquitin carboxyl-terminal hydrolase 17-like protein 6 (398 aa).

Positions 80–375 (AGLQNMGNTC…QAYVLFYIQK (296 aa)) constitute a USP domain. The Nucleophile role is filled by Cys89. His334 acts as the Proton acceptor in catalysis.

This sequence belongs to the peptidase C19 family. USP17 subfamily.

It is found in the nucleus. The protein localises to the cytoplasm. The catalysed reaction is Thiol-dependent hydrolysis of ester, thioester, amide, peptide and isopeptide bonds formed by the C-terminal Gly of ubiquitin (a 76-residue protein attached to proteins as an intracellular targeting signal).. Its function is as follows. Deubiquitinating enzyme that removes conjugated ubiquitin from specific proteins to regulate different cellular processes that may include cell proliferation, progression through the cell cycle, cell migration, and the cellular response to viral infection. Seems to be non-functional in the regulation of apoptosis. This Homo sapiens (Human) protein is Ubiquitin carboxyl-terminal hydrolase 17-like protein 6 (USP17L6P).